The sequence spans 122 residues: Small ribosomal subunit protein uS13 (122 aa).

Residues 98–116 (VRGQKTKTNARTRKGRRKT) are compositionally biased toward basic residues. Positions 98 to 122 (VRGQKTKTNARTRKGRRKTVGAATK) are disordered.

The protein belongs to the universal ribosomal protein uS13 family. Part of the 30S ribosomal subunit. Forms a loose heterodimer with protein S19. Forms two bridges to the 50S subunit in the 70S ribosome.

In terms of biological role, located at the top of the head of the 30S subunit, it contacts several helices of the 16S rRNA. In the 70S ribosome it contacts the 23S rRNA (bridge B1a) and protein L5 of the 50S subunit (bridge B1b), connecting the 2 subunits; these bridges are implicated in subunit movement. Contacts the tRNAs in the A and P-sites. The polypeptide is Small ribosomal subunit protein uS13 (Campylobacter fetus subsp. fetus (strain 82-40)).